Consider the following 481-residue polypeptide: Cobyric acid synthase (481 aa).

Positions 244-431 constitute a GATase cobBQ-type domain; the sequence is VLRVVIPVLP…LHGLFDAPEA (188 aa). Catalysis depends on Cys325, which acts as the Nucleophile. Residue His423 is part of the active site.

This sequence belongs to the CobB/CobQ family. CobQ subfamily.

It participates in cofactor biosynthesis; adenosylcobalamin biosynthesis. Its function is as follows. Catalyzes amidations at positions B, D, E, and G on adenosylcobyrinic A,C-diamide. NH(2) groups are provided by glutamine, and one molecule of ATP is hydrogenolyzed for each amidation. The polypeptide is Cobyric acid synthase (Ralstonia nicotianae (strain ATCC BAA-1114 / GMI1000) (Ralstonia solanacearum)).